We begin with the raw amino-acid sequence, 343 residues long: Aspartate carbamoyltransferase catalytic subunit (343 aa).

Carbamoyl phosphate is bound by residues R91 and T92. Residue K119 participates in L-aspartate binding. Carbamoyl phosphate contacts are provided by R141, H171, and Q174. L-aspartate contacts are provided by R204 and R259. G300 and P301 together coordinate carbamoyl phosphate.

It belongs to the aspartate/ornithine carbamoyltransferase superfamily. ATCase family. In terms of assembly, heterododecamer (2C3:3R2) of six catalytic PyrB chains organized as two trimers (C3), and six regulatory PyrI chains organized as three dimers (R2).

It catalyses the reaction carbamoyl phosphate + L-aspartate = N-carbamoyl-L-aspartate + phosphate + H(+). Its pathway is pyrimidine metabolism; UMP biosynthesis via de novo pathway; (S)-dihydroorotate from bicarbonate: step 2/3. Functionally, catalyzes the condensation of carbamoyl phosphate and aspartate to form carbamoyl aspartate and inorganic phosphate, the committed step in the de novo pyrimidine nucleotide biosynthesis pathway. The protein is Aspartate carbamoyltransferase catalytic subunit of Burkholderia vietnamiensis (strain G4 / LMG 22486) (Burkholderia cepacia (strain R1808)).